A 337-amino-acid chain; its full sequence is Ornithine carbamoyltransferase (337 aa).

Residues 56 to 59 (STRT), glutamine 83, arginine 107, and 134 to 137 (HPTQ) contribute to the carbamoyl phosphate site. Residues asparagine 168, aspartate 232, and 236-237 (SM) each bind L-ornithine. Carbamoyl phosphate-binding positions include 274–275 (CL) and arginine 320.

This sequence belongs to the aspartate/ornithine carbamoyltransferase superfamily. OTCase family.

The protein resides in the cytoplasm. The catalysed reaction is carbamoyl phosphate + L-ornithine = L-citrulline + phosphate + H(+). It participates in amino-acid biosynthesis; L-arginine biosynthesis; L-arginine from L-ornithine and carbamoyl phosphate: step 1/3. Its function is as follows. Reversibly catalyzes the transfer of the carbamoyl group from carbamoyl phosphate (CP) to the N(epsilon) atom of ornithine (ORN) to produce L-citrulline. The polypeptide is Ornithine carbamoyltransferase (Shigella flexneri serotype 5b (strain 8401)).